A 217-amino-acid polypeptide reads, in one-letter code: 3,4-dihydroxy-2-butanone 4-phosphate synthase (217 aa).

D-ribulose 5-phosphate is bound by residues 37-38, Asp42, 150-154, and Glu174; these read RE and RGGHT. Glu38 serves as a coordination point for Mg(2+). A Mg(2+)-binding site is contributed by His153.

Belongs to the DHBP synthase family. In terms of assembly, homodimer. Requires Mg(2+) as cofactor. Mn(2+) serves as cofactor.

It catalyses the reaction D-ribulose 5-phosphate = (2S)-2-hydroxy-3-oxobutyl phosphate + formate + H(+). The protein operates within cofactor biosynthesis; riboflavin biosynthesis; 2-hydroxy-3-oxobutyl phosphate from D-ribulose 5-phosphate: step 1/1. Its function is as follows. Catalyzes the conversion of D-ribulose 5-phosphate to formate and 3,4-dihydroxy-2-butanone 4-phosphate. The polypeptide is 3,4-dihydroxy-2-butanone 4-phosphate synthase (Salmonella paratyphi A (strain ATCC 9150 / SARB42)).